We begin with the raw amino-acid sequence, 106 residues long: Cell cycle protein GpsB (106 aa).

Positions 34-67 form a coiled coil; it reads LDVIIQDYDNFKQEIDRLKAENEKLKKSTPAVEQ. Residues 55-83 are disordered; sequence NEKLKKSTPAVEQSRSRSQQPPTSQVNYD. Low complexity predominate over residues 70–79; it reads SRSQQPPTSQ.

The protein belongs to the GpsB family. As to quaternary structure, forms polymers through the coiled coil domains. Interacts with PBP1, MreC and EzrA.

It is found in the cytoplasm. Divisome component that associates with the complex late in its assembly, after the Z-ring is formed, and is dependent on DivIC and PBP2B for its recruitment to the divisome. Together with EzrA, is a key component of the system that regulates PBP1 localization during cell cycle progression. Its main role could be the removal of PBP1 from the cell pole after pole maturation is completed. Also contributes to the recruitment of PBP1 to the division complex. Not essential for septum formation. The polypeptide is Cell cycle protein GpsB (Oceanobacillus iheyensis (strain DSM 14371 / CIP 107618 / JCM 11309 / KCTC 3954 / HTE831)).